We begin with the raw amino-acid sequence, 571 residues long: Methionine--tRNA ligase (571 aa).

The 'HIGH' region motif lies at 10–20; the sequence is PYVNAVPHLGN. Residues Cys-143, Cys-146, Cys-156, and Cys-159 each coordinate Zn(2+). The 'KMSKS' region signature appears at 333 to 337; the sequence is KFSKS. Lys-336 is a binding site for ATP.

The protein belongs to the class-I aminoacyl-tRNA synthetase family. MetG type 1 subfamily. Requires Zn(2+) as cofactor.

The protein resides in the cytoplasm. The enzyme catalyses tRNA(Met) + L-methionine + ATP = L-methionyl-tRNA(Met) + AMP + diphosphate. Its function is as follows. Is required not only for elongation of protein synthesis but also for the initiation of all mRNA translation through initiator tRNA(fMet) aminoacylation. The protein is Methionine--tRNA ligase of Sulfolobus acidocaldarius (strain ATCC 33909 / DSM 639 / JCM 8929 / NBRC 15157 / NCIMB 11770).